We begin with the raw amino-acid sequence, 397 residues long: Inositol 3-kinase (397 aa).

ATP contacts are provided by residues Ser228, 278-281 (GAGD), and Asn305. Residue Asp281 is the Proton acceptor of the active site.

Belongs to the carbohydrate kinase pfkB family. As to expression, expressed in roots, leaf blade shoots, leaf sheath shoots and panicles.

It catalyses the reaction myo-inositol + ATP = 1D-myo-inositol 3-phosphate + ADP + H(+). Functionally, kinase that phosphorylates myo-inositol to produce multiple myo-inositol monophosphates. Participates in phytic acid biosynthesis in developing seeds. Phytic acid is the primary storage form of phosphorus in cereal grains and other plant seeds. This chain is Inositol 3-kinase, found in Oryza sativa subsp. japonica (Rice).